A 175-amino-acid polypeptide reads, in one-letter code: uncharacterized protein (175 aa).

The tract at residues 113-175 (AQLPRDSRGN…RTRSGGLERL (63 aa)) is disordered.

This is an uncharacterized protein from Bos taurus (Bovine).